The following is a 482-amino-acid chain: Rho GTPase-activating protein 15 (482 aa).

Phosphoserine is present on residues Ser51, Ser111, Ser205, Ser208, and Ser250. Residues Met87–Asp198 form the PH domain. Residues Ser288 to Phe477 form the Rho-GAP domain.

The protein resides in the cytoplasm. The protein localises to the membrane. Its function is as follows. GTPase activator for the Rho-type GTPases by converting them to an inactive GDP-bound state. Has activity toward RAC1. Overexpression results in an increase in actin stress fibers and cell contraction. In Rattus norvegicus (Rat), this protein is Rho GTPase-activating protein 15 (Arhgap15).